The primary structure comprises 294 residues: Aspartate carbamoyltransferase catalytic subunit (294 aa).

Carbamoyl phosphate is bound by residues arginine 49 and threonine 50. L-aspartate is bound at residue lysine 77. Positions 99, 127, and 130 each coordinate carbamoyl phosphate. Residues arginine 161 and arginine 211 each coordinate L-aspartate. Residues glycine 250 and proline 251 each coordinate carbamoyl phosphate.

Belongs to the aspartate/ornithine carbamoyltransferase superfamily. ATCase family. Heterododecamer (2C3:3R2) of six catalytic PyrB chains organized as two trimers (C3), and six regulatory PyrI chains organized as three dimers (R2).

The catalysed reaction is carbamoyl phosphate + L-aspartate = N-carbamoyl-L-aspartate + phosphate + H(+). It participates in pyrimidine metabolism; UMP biosynthesis via de novo pathway; (S)-dihydroorotate from bicarbonate: step 2/3. Its function is as follows. Catalyzes the condensation of carbamoyl phosphate and aspartate to form carbamoyl aspartate and inorganic phosphate, the committed step in the de novo pyrimidine nucleotide biosynthesis pathway. This Sulfurovum sp. (strain NBC37-1) protein is Aspartate carbamoyltransferase catalytic subunit.